We begin with the raw amino-acid sequence, 319 residues long: Methionyl-tRNA formyltransferase (319 aa).

113 to 116 (SLLP) is a binding site for (6S)-5,6,7,8-tetrahydrofolate.

This sequence belongs to the Fmt family.

The enzyme catalyses L-methionyl-tRNA(fMet) + (6R)-10-formyltetrahydrofolate = N-formyl-L-methionyl-tRNA(fMet) + (6S)-5,6,7,8-tetrahydrofolate + H(+). In terms of biological role, attaches a formyl group to the free amino group of methionyl-tRNA(fMet). The formyl group appears to play a dual role in the initiator identity of N-formylmethionyl-tRNA by promoting its recognition by IF2 and preventing the misappropriation of this tRNA by the elongation apparatus. The polypeptide is Methionyl-tRNA formyltransferase (Pseudomonas fluorescens (strain ATCC BAA-477 / NRRL B-23932 / Pf-5)).